The primary structure comprises 369 residues: DNA replication and repair protein RecF (369 aa).

Position 30-37 (30-37) interacts with ATP; sequence GPNGSGKT.

It belongs to the RecF family.

The protein localises to the cytoplasm. In terms of biological role, the RecF protein is involved in DNA metabolism; it is required for DNA replication and normal SOS inducibility. RecF binds preferentially to single-stranded, linear DNA. It also seems to bind ATP. This is DNA replication and repair protein RecF from Chlorobium luteolum (strain DSM 273 / BCRC 81028 / 2530) (Pelodictyon luteolum).